The primary structure comprises 952 residues: Anion exchange protein 4 (952 aa).

Positions 1–41 (MKLPGQGDFESSDAHENAHSEEPDSGLGPGPGLNGPSGIDI) are disordered. Basic and acidic residues predominate over residues 12–22 (SDAHENAHSEE). A run of 4 helical transmembrane segments spans residues 385-405 (AVFY…GLLG), 413-433 (GVLE…LMAG), 470-490 (VGIW…SLLV), and 501-521 (FCAL…LNLI). Residues N546 and N569 are each glycosylated (N-linked (GlcNAc...) asparagine). 7 helical membrane-spanning segments follow: residues 593–613 (VPDI…CAIA), 634–654 (FSSV…GLAT), 681–701 (PWWL…LIFM), 727–747 (LFCV…WYVS), 784–804 (GLVV…LKFI), 807–827 (PVLY…IQFV), and 870–890 (VVKS…LVAI). The segment at 915 to 938 (ETIPENRSEPEHLFSGNDSEDSEL) is disordered. N920, N931, and N948 each carry an N-linked (GlcNAc...) asparagine glycan.

The protein belongs to the anion exchanger (TC 2.A.31) family. In terms of tissue distribution, expressed in submandibular gland (SMG) duct and cortical collecting duct (CCD) of kidney. Lower expressed in duodenal villi.

The protein resides in the basolateral cell membrane. The enzyme catalyses 2 hydrogencarbonate(out) + chloride(in) + Na(+)(out) = 2 hydrogencarbonate(in) + chloride(out) + Na(+)(in). The catalysed reaction is K(+)(in) + 2 hydrogencarbonate(in) + chloride(out) = K(+)(out) + 2 hydrogencarbonate(out) + chloride(in). It carries out the reaction Li(+)(in) + 2 hydrogencarbonate(in) + chloride(out) = Li(+)(out) + 2 hydrogencarbonate(out) + chloride(in). It catalyses the reaction Rb(+)(in) + 2 hydrogencarbonate(in) + chloride(out) = Rb(+)(out) + 2 hydrogencarbonate(out) + chloride(in). The enzyme catalyses Cs(+)(in) + 2 hydrogencarbonate(in) + chloride(out) = Cs(+)(out) + 2 hydrogencarbonate(out) + chloride(in). With respect to regulation, cl(-)/HCO3(-) exchanger activity is substantially increased in response to 5 uM isoproterenol. Cl(-)/HCO3(-) exchanger activity is increased by both forskolin and coexpression with the catalytic subunit alpha of PKA. In terms of biological role, electroneutral Cl(-)/HCO3(-) antiporter that favors chloride ion entry and efflux of hydrogencarbonate and sodium ion across the basolateral membrane and may participate in salivary secretion. Also mediates Cl(-)/HCO3(-) exchange activity in the presence of K(+) as well as Cs(+), Li(+), and Rb(+). Does not contribute to Cl(-)/HCO3(-) exchanger in the apical membrane of the upper villous epithelium. The chain is Anion exchange protein 4 from Mus musculus (Mouse).